Reading from the N-terminus, the 99-residue chain is Acylphosphatase-1 (99 aa).

Ala-2 is modified (N-acetylalanine). Positions 9–99 constitute an Acylphosphatase-like domain; sequence SVDYEIFGKV…LDYSDFQIVK (91 aa). Residues Arg-24 and Asn-42 contribute to the active site.

The protein belongs to the acylphosphatase family.

It carries out the reaction an acyl phosphate + H2O = a carboxylate + phosphate + H(+). This chain is Acylphosphatase-1 (Acyp1), found in Mus musculus (Mouse).